Consider the following 65-residue polypeptide: Putative cytochrome c oxidase subunit 5C-4 (65 aa).

The helical transmembrane segment at 20–37 (EIIYGITLGFAVGGLWKM) threads the bilayer.

This sequence belongs to the cytochrome c oxidase subunit 5C family.

It is found in the mitochondrion inner membrane. Functionally, this protein is one of the nuclear-coded polypeptide chains of cytochrome c oxidase, the terminal oxidase in mitochondrial electron transport. This chain is Putative cytochrome c oxidase subunit 5C-4, found in Arabidopsis thaliana (Mouse-ear cress).